Consider the following 85-residue polypeptide: Depressant scorpion toxin BmKIM (85 aa).

Residues 1–21 (MKLFLLLVFFASMLIDGLVNA) form the signal peptide. One can recognise an LCN-type CS-alpha/beta domain in the interval 22-82 (DGYIRGSNGC…TWKSESNTCG (61 aa)). Disulfide bonds link C31–C81, C35–C56, C42–C63, and C46–C65. G82 is modified (glycine amide).

Belongs to the long (4 C-C) scorpion toxin superfamily. Sodium channel inhibitor family. As to expression, expressed by the venom gland.

The protein resides in the secreted. In terms of biological role, causes a slow progressive depressant flaccid paralysis, when injected into S.falculata blowfly larvae. Inhibits dose-dependently the total sodium (Nav) currents both in dorsal root ganglia neurons and in ventricular myocytes. Is toxic to mice by intravenous injection, but not by subcutaneous or intracerebroventricular injection. Produces antiarrhythmia in rat. Is then active on both mammals and insects. The protein is Depressant scorpion toxin BmKIM (KIM2) of Olivierus martensii (Manchurian scorpion).